Consider the following 291-residue polypeptide: Probable cell wall amidase LytH (291 aa).

A signal peptide spans 1-40 (MKKFNDWLEKHNLRNIPTLIVVVAFVLFVFMTIAFLNHND). The 65-residue stretch at 41–105 (EDSSTIYITE…WVAGWHTNLN (65 aa)) folds into the SH3b domain. Residues 109-146 (DKNPNAKPLKDKTIVLDPGHGGSDQGASSNTHKKSKEK) form a disordered region. The 165-residue stretch at 122–286 (IVLDPGHGGS…VEQAIVEGLR (165 aa)) folds into the MurNAc-LAA domain.

Belongs to the N-acetylmuramoyl-L-alanine amidase 3 family.

It is found in the secreted. Its function is as follows. Probably involved in cell-wall metabolism. The polypeptide is Probable cell wall amidase LytH (lytH) (Staphylococcus saprophyticus subsp. saprophyticus (strain ATCC 15305 / DSM 20229 / NCIMB 8711 / NCTC 7292 / S-41)).